We begin with the raw amino-acid sequence, 778 residues long: MSGSHLRLRFLSLLLLCCVSSSTSSLFTFSYPVLDLVACRSHQIQAFTQFKNEFDTHRCNHSDHSNGVWCDNSTGVVTKLQLNACLSGTLNPNSSLFWFHQLRFLNLSHNNFTSTSFPSEFGNLNKVEVLDLSFNSFTGQVPSSFSNLSQLTELHLSNNQLTGGFPQVQNLTNLSHLDFENNKFSGTVPSSLLMMPFLSYLNLYGNHFTGSIEVSTSSKLEILYLGLKPFEGQILEPISKLINLKRLELSFLNISYPLDLNLFSSLKSLTYLDLSGNSISPRSLRSDLYIPLTLEKLLLEQCGIIEFPNILKTLQKLEYIDMSNNRINGKIPEWLWRLPRLRSMSLANNSFNGFEGSTDVLVNSSMEILFMHSNNIQGALPNLPLSIKAFSAGYNNFSGEIPLSICNRSSLAALSLPYNNFTGKIPQCLSNLTFVHLRKNNLEGSIPDTLCAGDSLQTLDIGFNLISGTLPRSLLNCSSLEFLSVDNNRIKDTFPFWLKALPNLQVLILSSNKLYGPIAPPHQSPLAFPELRIFEIADNMFTGTLSPRYFVNWKTSSLTVNEDGDLYMVYKNNAFGIDSYVYRDTIDMKYKGLSMEQQMVLNSYSAIDFSGNRLEGQIPKSIGLLKELIALNLSNNAFTCHIPLSLANATELESLDLSRNQLSGTIPNGLKTLSFLAYINVSHNKLKGTQIIGQHKSSFEGNAGLCGLPLEETCSGKNAPPTQQPKEEDEEQEQVLNWKAVATGYGTGLLLGLAIAQVIASYKPDWLVKIIGLFRFCF.

The signal sequence occupies residues 1–24 (MSGSHLRLRFLSLLLLCCVSSSTS). Residues 25 to 739 (SLFTFSYPVL…EEQEQVLNWK (715 aa)) are Extracellular-facing. Residues N60, N72, N93, N106, N111, N147, N170, and N173 are each glycosylated (N-linked (GlcNAc...) asparagine). LRR repeat units lie at residues 99–123 (FHQL…EFGN), 125–147 (NKVE…SFSN), 148–171 (LSQL…VQNL), 172–195 (TNLS…LLMM), and 197–219 (FLSY…TSSK). An LRR 6; degenerate repeat occupies 220–240 (LEILYLGLKPFEGQILEPISK). LRR repeat units follow at residues 241–265 (LINL…LFSS), 266–291 (LKSL…LYIP), 293–313 (TLEK…ILKT), 314–338 (LQKL…LWRL), 340–363 (RLRS…VLVN), and 364–387 (SSME…PLSI). N-linked (GlcNAc...) asparagine glycosylation occurs at N253. Residues N348 and N363 are each glycosylated (N-linked (GlcNAc...) asparagine). Residues 388–407 (KAFSAGYNNFSGEIPLSICN) form an LRR 13; degenerate repeat. N-linked (GlcNAc...) asparagine glycans are attached at residues N396, N407, N420, N431, and N476. 10 LRR repeats span residues 408 to 429 (RSSL…PQCL), 430 to 453 (SNLT…LCAG), 455 to 477 (SLQT…LLNC), 479 to 500 (SLEF…WLKA), 501 to 525 (LPNL…HQSP), 528 to 552 (FPEL…YFVN), 601 to 625 (LNSY…IGLL), 626 to 649 (KELI…LANA), 650 to 673 (TELE…LKTL), and 678 to 700 (YINV…SSFE). N632 and N648 each carry an N-linked (GlcNAc...) asparagine glycan. N680 carries N-linked (GlcNAc...) asparagine glycosylation. Residues 740-760 (AVATGYGTGLLLGLAIAQVIA) traverse the membrane as a helical segment. Over 761–778 (SYKPDWLVKIIGLFRFCF) the chain is Cytoplasmic.

It belongs to the RLP family.

The protein localises to the cell membrane. This Arabidopsis thaliana (Mouse-ear cress) protein is Receptor like protein 28.